We begin with the raw amino-acid sequence, 183 residues long: uncharacterized protein (183 aa).

4 helical membrane-spanning segments follow: residues 37–59 (LFGYISVGFLLFHPLLEVLPRQF), 79–98 (AILLGIAGWAVMLTLAVTSV), 110–132 (WRTFHGILAVVLITVVGYHVLVL), and 142–161 (AFYAVLLAGGYVTMIKTYVF).

Its subcellular location is the cell membrane. This is an uncharacterized protein from Archaeoglobus fulgidus (strain ATCC 49558 / DSM 4304 / JCM 9628 / NBRC 100126 / VC-16).